The following is a 386-amino-acid chain: 11-beta-hydroxysteroid dehydrogenase type 2 (386 aa).

Residue 82–111 coordinates NAD(+); the sequence is TRAVLITGCDTGFGKETAKKLDAMGFTVLA. Ser-219 is a binding site for substrate. Tyr-232 (proton acceptor) is an active-site residue.

This sequence belongs to the short-chain dehydrogenases/reductases (SDR) family. As to quaternary structure, interacts with ligand-free cytoplasmic NR3C2. As to expression, highly expressed in kidney. Also found in colon and small intestine. Not expressed in the adrenal gland. Expressed in uterus.

The protein resides in the microsome. Its subcellular location is the endoplasmic reticulum. The catalysed reaction is an 11beta-hydroxysteroid + NAD(+) = an 11-oxosteroid + NADH + H(+). It carries out the reaction corticosterone + NAD(+) = 11-dehydrocorticosterone + NADH + H(+). The enzyme catalyses 11beta,17beta-dihydroxyandrost-4-ene-3-one + NAD(+) = 17beta-hydroxyandrost-4-ene-3,11-dione + NADH + H(+). It catalyses the reaction 11beta-hydroxyandrost-4-ene-3,17-dione + NAD(+) = androst-4-ene-3,11,17-trione + NADH + H(+). Its pathway is steroid metabolism. Inhibited by glycyrrhetinic acid. Induced by progesterone, through the Ihh signaling pathway. Functionally, catalyzes the conversion of biologically active 11beta-hydroxyglucocorticoids (11beta-hydroxysteroid) such as corticosterone, to inactive 11-ketoglucocorticoids (11-oxosteroid) such as 11-dehydrocorticosterone, in the presence of NAD(+). Functions as a dehydrogenase (oxidase), thereby decreasing the concentration of active glucocorticoids, thus protecting the nonselective mineralocorticoid receptor from occupation by glucocorticoids. Plays an important role in maintaining glucocorticoids balance during preimplantation and protects the fetus from excessive maternal corticosterone exposure. Catalyzes the oxidation of 11beta-hydroxytestosterone (11beta,17beta-dihydroxyandrost-4-ene-3-one) to 11-ketotestosterone (17beta-hydroxyandrost-4-ene-3,11-dione), a major bioactive androgen. Catalyzes the conversion of 11beta-hydroxyandrostenedione (11beta-hydroxyandrost-4-ene-3,17-dione) to 11-ketoandrostenedione (androst-4-ene-3,11,17-trione), which can be further metabolized to 11-ketotestosterone. Converts 7-beta-25-dihydroxycholesterol to 7-oxo-25-hydroxycholesterol in vitro. 7-beta-25-dihydroxycholesterol (not 7-oxo-25-hydroxycholesterol) acts as a ligand for the G-protein-coupled receptor (GPCR) Epstein-Barr virus-induced gene 2 (EBI2) and may thereby regulate immune cell migration. This is 11-beta-hydroxysteroid dehydrogenase type 2 (Hsd11b2) from Mus musculus (Mouse).